Reading from the N-terminus, the 557-residue chain is Membrane protein insertase YidC (557 aa).

The chain crosses the membrane as a helical span at residues 1–21 (MNWLRNSLIAAILVITYVLFI). Positions 52–71 (SDDAVASSATEESDVPEVSV) are disordered. 5 helical membrane passes run 346-366 (TIDY…LDFI), 369-389 (LVGN…AVFF), 439-459 (FGGC…YWMI), 470-490 (FFLW…PLLM), and 517-537 (PIGF…YWVV).

The protein belongs to the OXA1/ALB3/YidC family. Type 1 subfamily. In terms of assembly, interacts with the Sec translocase complex via SecD. Specifically interacts with transmembrane segments of nascent integral membrane proteins during membrane integration.

It localises to the cell inner membrane. Functionally, required for the insertion and/or proper folding and/or complex formation of integral membrane proteins into the membrane. Involved in integration of membrane proteins that insert both dependently and independently of the Sec translocase complex, as well as at least some lipoproteins. Aids folding of multispanning membrane proteins. In Saccharophagus degradans (strain 2-40 / ATCC 43961 / DSM 17024), this protein is Membrane protein insertase YidC.